A 210-amino-acid chain; its full sequence is Rho-related GTP-binding protein RhoD (210 aa).

24–31 lines the GTP pocket; sequence GDGGCGKT. The short motif at 46-54 is the Effector region element; it reads YTPTVFERY. GTP is bound by residues 71–75 and 129–132; these read DTAGQ and CKTD. Residue Cys-207 is modified to Cysteine methyl ester. Cys-207 carries S-geranylgeranyl cysteine lipidation. Residues 208–210 constitute a propeptide, removed in mature form; sequence VVT.

Belongs to the small GTPase superfamily. Rho family. In terms of assembly, interacts (in GTP-bound form) with DIAPH2 isoform 3, DAPK3, FILIP1 and WHAMM. Interacts with PAK5. Interacts (independent of GTP-loaded status) with ANKFY1. Heart, placenta, liver, skeletal muscle, and pancreas and, with weaker intensity, in several other tissues.

It localises to the cell membrane. It is found in the early endosome. Its function is as follows. Involved in endosome dynamics. May coordinate membrane transport with the function of the cytoskeleton. Involved in the internalization and trafficking of activated tyrosine kinase receptors such as PDGFRB. Participates in the reorganization of actin cytoskeleton; the function seems to involve WHAMM and includes regulation of filopodia formation and actin filament bundling. Can modulate the effect of DAPK3 in reorganization of actin cytoskeleton and focal adhesion dissolution. The sequence is that of Rho-related GTP-binding protein RhoD from Homo sapiens (Human).